Here is a 322-residue protein sequence, read N- to C-terminus: RNA-binding protein KhpB (322 aa).

The tract at residues 3 to 52 (VFEGNTVAAAIAAGLKQLHRTRDQVEVEVIAEAKKGFLGLGKHPAQVRLT) is jag_N domain. The segment covering 58 to 82 (AAPATTPTSATATAQQSVATESTTA) has biased composition (low complexity). The tract at residues 58–162 (AAPATTPTSA…AADQSQTPRT (105 aa)) is disordered. Phosphothreonine is present on Thr-89. Over residues 89-99 (TVQTPKSTPTR) the composition is skewed to polar residues. A compositionally biased stretch (low complexity) spans 100-129 (QAKTSQATTSAAKPATSKAKAVAKPASMAV). The span at 141–161 (SKPATTSKTKSVAADQSQTPR) shows a compositional bias: polar residues. One can recognise a KH domain in the interval 174–251 (ETAVRALCDY…ASHVNVVLDV (78 aa)). Residues 256–322 (ERRAATLKRL…HRAVVVAIRK (67 aa)) enclose the R3H domain.

As to quaternary structure, forms a complex with KhpA.

It is found in the cytoplasm. A probable RNA chaperone. Forms a complex with KhpA which binds to cellular RNA and controls its expression. Plays a role in peptidoglycan (PG) homeostasis and cell length regulation. Functionally, necessary for correct cell elongation. This chain is RNA-binding protein KhpB, found in Lactiplantibacillus plantarum (strain ATCC BAA-793 / NCIMB 8826 / WCFS1) (Lactobacillus plantarum).